A 118-amino-acid chain; its full sequence is MKTIIVFLSFLVLVLATKFGDANEGVNREQTKEVIQNEFRGDFLNEMAAMSLLQQLEAIESALLEKEADRNSRQKRCNGKNVPCGSNHSPCCSGLSCEETFGYGWLYKSPYCVIPSNG.

A signal peptide spans 1 to 16 (MKTIIVFLSFLVLVLA). Residues 17-76 (TKFGDANEGVNREQTKEVIQNEFRGDFLNEMAAMSLLQQLEAIESALLEKEADRNSRQKR) constitute a propeptide that is removed on maturation. Cystine bridges form between C77–C92, C84–C97, and C91–C112.

Belongs to the neurotoxin 14 (magi-1) family. 06 (ICK-Trit) subfamily. In terms of tissue distribution, expressed by the venom gland.

Its subcellular location is the secreted. Its function is as follows. Ion channel inhibitor. The protein is U16-barytoxin-Tl1c of Trittame loki (Brush-footed trapdoor spider).